The following is a 215-amino-acid chain: Urease accessory protein UreE (215 aa).

Positions 134-215 (FDPEGGAYAP…HGHSHKHDHK (82 aa)) are disordered. The span at 164 to 206 (GHHDHADHEHDHKHDHGKHDHAGHDHAHDHHVHDEHCGHDHGH) shows a compositional bias: basic and acidic residues.

This sequence belongs to the UreE family.

The protein resides in the cytoplasm. Involved in urease metallocenter assembly. Binds nickel. Probably functions as a nickel donor during metallocenter assembly. The polypeptide is Urease accessory protein UreE (Rhodopseudomonas palustris (strain HaA2)).